The sequence spans 421 residues: Serine hydroxymethyltransferase (421 aa).

(6S)-5,6,7,8-tetrahydrofolate contacts are provided by residues leucine 121 and 125–127 (GHL). Residue lysine 230 is modified to N6-(pyridoxal phosphate)lysine. Residues glutamate 246 and 354-356 (SPF) contribute to the (6S)-5,6,7,8-tetrahydrofolate site.

Belongs to the SHMT family. In terms of assembly, homodimer. It depends on pyridoxal 5'-phosphate as a cofactor.

It localises to the cytoplasm. The enzyme catalyses (6R)-5,10-methylene-5,6,7,8-tetrahydrofolate + glycine + H2O = (6S)-5,6,7,8-tetrahydrofolate + L-serine. Its pathway is one-carbon metabolism; tetrahydrofolate interconversion. It functions in the pathway amino-acid biosynthesis; glycine biosynthesis; glycine from L-serine: step 1/1. Functionally, catalyzes the reversible interconversion of serine and glycine with tetrahydrofolate (THF) serving as the one-carbon carrier. This reaction serves as the major source of one-carbon groups required for the biosynthesis of purines, thymidylate, methionine, and other important biomolecules. Also exhibits THF-independent aldolase activity toward beta-hydroxyamino acids, producing glycine and aldehydes, via a retro-aldol mechanism. The chain is Serine hydroxymethyltransferase from Rickettsia felis (strain ATCC VR-1525 / URRWXCal2) (Rickettsia azadi).